A 144-amino-acid chain; its full sequence is Ribosome-binding factor A (144 aa).

Positions 120–144 (DKRRMAESGREEDDAAPDETTEDNA) are disordered. A compositionally biased stretch (acidic residues) spans 129-144 (REEDDAAPDETTEDNA).

Belongs to the RbfA family. As to quaternary structure, monomer. Binds 30S ribosomal subunits, but not 50S ribosomal subunits or 70S ribosomes.

Its subcellular location is the cytoplasm. Its function is as follows. One of several proteins that assist in the late maturation steps of the functional core of the 30S ribosomal subunit. Associates with free 30S ribosomal subunits (but not with 30S subunits that are part of 70S ribosomes or polysomes). Required for efficient processing of 16S rRNA. May interact with the 5'-terminal helix region of 16S rRNA. The protein is Ribosome-binding factor A of Aeromonas hydrophila subsp. hydrophila (strain ATCC 7966 / DSM 30187 / BCRC 13018 / CCUG 14551 / JCM 1027 / KCTC 2358 / NCIMB 9240 / NCTC 8049).